A 418-amino-acid chain; its full sequence is Secreted aspartic protease 5 (418 aa).

Residues 1–18 form the signal peptide; the sequence is MFLKNILSVLAFALLIDA. The propeptide at 19–76 is activation peptide; the sequence is APVKRSPGFVTLDFNVKRSLVDPDDPTVEAKRSPLFLEFTPSEFPVDETGRDGDVDKR. The 315-residue stretch at 90 to 404 folds into the Peptidase A1 domain; that stretch reads YTADITVGSD…NLDDKKISMA (315 aa). The active site involves D108. Residue 108–110 participates in pepstatin A binding; sequence DTG. C123 and C135 are oxidised to a cystine. Residue 161–162 participates in pepstatin A binding; that stretch reads GD. Residue E268 coordinates Zn(2+). Residue D294 is part of the active site. 294–298 provides a ligand contact to pepstatin A; sequence DSGTT. C332 and C370 form a disulfide bridge.

Belongs to the peptidase A1 family.

The protein localises to the secreted. The catalysed reaction is Preferential cleavage at the carboxyl of hydrophobic amino acids, but fails to cleave 15-Leu-|-Tyr-16, 16-Tyr-|-Leu-17 and 24-Phe-|-Phe-25 of insulin B chain. Activates trypsinogen, and degrades keratin.. Its activity is regulated as follows. Inhibited by pepstatin A analogs. In terms of biological role, secreted aspartic peptidases (SAPs) are a group of ten acidic hydrolases considered as key virulence factors. These enzymes supply the fungus with nutrient amino acids as well as are able to degrade the selected host's proteins involved in the immune defense. Moreover, acts toward human hemoglobin though limited proteolysis to generate a variety of antimicrobial hemocidins, enabling to compete with the other microorganisms of the same physiological niche using the microbicidal peptides generated from the host protein. The polypeptide is Secreted aspartic protease 5 (Candida albicans (strain SC5314 / ATCC MYA-2876) (Yeast)).